The primary structure comprises 120 residues: Large ribosomal subunit protein uL18 (120 aa).

This sequence belongs to the universal ribosomal protein uL18 family. As to quaternary structure, part of the 50S ribosomal subunit; part of the 5S rRNA/L5/L18/L25 subcomplex. Contacts the 5S and 23S rRNAs.

In terms of biological role, this is one of the proteins that bind and probably mediate the attachment of the 5S RNA into the large ribosomal subunit, where it forms part of the central protuberance. The protein is Large ribosomal subunit protein uL18 of Rhizobium meliloti (strain 1021) (Ensifer meliloti).